The sequence spans 373 residues: Chorismate synthase (373 aa).

Residue arginine 46 participates in NADP(+) binding. Residues 123 to 125 (RSS), 250 to 251 (NA), glycine 295, 310 to 314 (KPTPS), and arginine 337 each bind FMN.

The protein belongs to the chorismate synthase family. FMNH2 serves as cofactor.

The catalysed reaction is 5-O-(1-carboxyvinyl)-3-phosphoshikimate = chorismate + phosphate. The protein operates within metabolic intermediate biosynthesis; chorismate biosynthesis; chorismate from D-erythrose 4-phosphate and phosphoenolpyruvate: step 7/7. Catalyzes the anti-1,4-elimination of the C-3 phosphate and the C-6 proR hydrogen from 5-enolpyruvylshikimate-3-phosphate (EPSP) to yield chorismate, which is the branch point compound that serves as the starting substrate for the three terminal pathways of aromatic amino acid biosynthesis. This reaction introduces a second double bond into the aromatic ring system. In Methanococcus aeolicus (strain ATCC BAA-1280 / DSM 17508 / OCM 812 / Nankai-3), this protein is Chorismate synthase.